We begin with the raw amino-acid sequence, 468 residues long: uncharacterized protein (468 aa).

The segment at 447–468 is disordered; the sequence is AVHVSNGDKPKVALPDTQLGSH.

The protein belongs to the mycobacterial PPE family.

This is an uncharacterized protein from Mycobacterium tuberculosis (strain ATCC 25618 / H37Rv).